The primary structure comprises 90 residues: MKLPIIFLTLLIFVSSCTSVLINGSSDEERTYSFSPRASPFDPRSLNQELKIGRIGYCFDCARACMRRGKYIRTCSFERKLCRYSISDIK.

A signal peptide spans 1–19 (MKLPIIFLTLLIFVSSCTS). 2 disulfide bridges follow: cysteine 58–cysteine 75 and cysteine 61–cysteine 82.

The protein belongs to the DEFL family. As to expression, expressed in the pistil. Detected exclusively in the synergid cells.

The protein localises to the secreted. Functionally, inactive pollen tube attractants guiding pollen tubes to the ovular micropyle. The polypeptide is Protein LURE 1.5 (Arabidopsis thaliana (Mouse-ear cress)).